Here is a 102-residue protein sequence, read N- to C-terminus: uncharacterized protein (102 aa).

Residues isoleucine 7–glutamine 23 traverse the membrane as a helical segment.

Its subcellular location is the membrane. This is an uncharacterized protein from Haemophilus influenzae (strain ATCC 51907 / DSM 11121 / KW20 / Rd).